We begin with the raw amino-acid sequence, 133 residues long: Small ribosomal subunit protein uS19 (133 aa).

This sequence belongs to the universal ribosomal protein uS19 family.

Its function is as follows. Protein S19 forms a complex with S13 that binds strongly to the 16S ribosomal RNA. This Thermococcus onnurineus (strain NA1) protein is Small ribosomal subunit protein uS19.